A 322-amino-acid polypeptide reads, in one-letter code: Major serine/threonine-protein phosphatase PP2A-2 catalytic subunit (322 aa).

Asp-70, His-72, Asp-98, and Asn-130 together coordinate Mn(2+). His-131 serves as the catalytic Proton donor. 2 residues coordinate Mn(2+): His-180 and His-254. Leu-322 is modified (leucine methyl ester).

It belongs to the PPP phosphatase family. PP-2A subfamily. It depends on Mn(2+) as a cofactor.

It carries out the reaction O-phospho-L-seryl-[protein] + H2O = L-seryl-[protein] + phosphate. The enzyme catalyses O-phospho-L-threonyl-[protein] + H2O = L-threonyl-[protein] + phosphate. In terms of biological role, essential role in cell cycle control. PP2A may be involved in controlling the entry into mitosis, possibly acting as an inhibitor. The sequence is that of Major serine/threonine-protein phosphatase PP2A-2 catalytic subunit (ppa2) from Schizosaccharomyces pombe (strain 972 / ATCC 24843) (Fission yeast).